The primary structure comprises 267 residues: 4-hydroxy-tetrahydrodipicolinate reductase (267 aa).

10–15 is an NAD(+) binding site; that stretch reads GANGRM. Arginine 37 contributes to the NADP(+) binding site. Residues 98–100 and 122–125 contribute to the NAD(+) site; these read GTT and ARNY. Histidine 155 serves as the catalytic Proton donor/acceptor. Position 156 (histidine 156) interacts with (S)-2,3,4,5-tetrahydrodipicolinate. Lysine 159 acts as the Proton donor in catalysis. 165-166 is a binding site for (S)-2,3,4,5-tetrahydrodipicolinate; it reads GT.

The protein belongs to the DapB family.

The protein resides in the cytoplasm. It carries out the reaction (S)-2,3,4,5-tetrahydrodipicolinate + NAD(+) + H2O = (2S,4S)-4-hydroxy-2,3,4,5-tetrahydrodipicolinate + NADH + H(+). It catalyses the reaction (S)-2,3,4,5-tetrahydrodipicolinate + NADP(+) + H2O = (2S,4S)-4-hydroxy-2,3,4,5-tetrahydrodipicolinate + NADPH + H(+). It functions in the pathway amino-acid biosynthesis; L-lysine biosynthesis via DAP pathway; (S)-tetrahydrodipicolinate from L-aspartate: step 4/4. Its function is as follows. Catalyzes the conversion of 4-hydroxy-tetrahydrodipicolinate (HTPA) to tetrahydrodipicolinate. This Pseudoalteromonas translucida (strain TAC 125) protein is 4-hydroxy-tetrahydrodipicolinate reductase.